Here is a 315-residue protein sequence, read N- to C-terminus: Methionyl-tRNA formyltransferase (315 aa).

113–116 (SLLP) is a binding site for (6S)-5,6,7,8-tetrahydrofolate.

The protein belongs to the Fmt family.

It carries out the reaction L-methionyl-tRNA(fMet) + (6R)-10-formyltetrahydrofolate = N-formyl-L-methionyl-tRNA(fMet) + (6S)-5,6,7,8-tetrahydrofolate + H(+). In terms of biological role, attaches a formyl group to the free amino group of methionyl-tRNA(fMet). The formyl group appears to play a dual role in the initiator identity of N-formylmethionyl-tRNA by promoting its recognition by IF2 and preventing the misappropriation of this tRNA by the elongation apparatus. This chain is Methionyl-tRNA formyltransferase, found in Pectobacterium atrosepticum (strain SCRI 1043 / ATCC BAA-672) (Erwinia carotovora subsp. atroseptica).